Consider the following 810-residue polypeptide: Phospholipase D alpha 1 (810 aa).

The C2 domain maps to 1–126 (MAQHLLHGTL…INGEEVDQWV (126 aa)). Position 187 (Asp187) interacts with Ca(2+). Positions 327–366 (TMFTHHQKIVVVDSEMPSRGGSEMRRIVSFVGGIDLCDGR) constitute a PLD phosphodiesterase 1 domain. Active-site residues include His332, Lys334, and Asp339. His332 contacts a 1,2-diacyl-sn-glycero-3-phosphate. Residues His372 and His406 each contribute to the Ca(2+) site. Residues Gln522 and His661 each coordinate a 1,2-diacyl-sn-glycero-3-phosphate. The PLD phosphodiesterase 2 domain occupies 656–683 (FMIYVHTKMMIVDDEYIIIGSANINQRS). Active-site residues include His661, Lys663, and Asp668. Position 722 (Glu722) interacts with Ca(2+).

Belongs to the phospholipase D family. C2-PLD subfamily. In terms of assembly, interacts with GPA1. This binding inhibits PLDALPHA1 activity and is relieved by GTP. Ca(2+) serves as cofactor. In terms of tissue distribution, highly expressed in roots, stems and flowers, moderately in leaves, seedlings and siliques. Not detected in seeds.

It is found in the cytoplasm. The protein localises to the cell membrane. The protein resides in the mitochondrion membrane. It localises to the microsome membrane. Its subcellular location is the vacuole. It is found in the cytoplasmic vesicle. The protein localises to the clathrin-coated vesicle. The enzyme catalyses a 1,2-diacyl-sn-glycero-3-phosphocholine + H2O = a 1,2-diacyl-sn-glycero-3-phosphate + choline + H(+). Not inhibited by neomycin. Functionally, hydrolyzes glycerol-phospholipids at the terminal phosphodiesteric bond to generate phosphatidic acids (PA). Plays an important role in various cellular processes, including phytohormone action and response to stress, characterized by acidification of the cell. Involved in wound induction of jasmonic acid. May be involved in membrane lipid remodeling. Probably involved in freezing tolerance by modulating the cold-responsive genes and accumulation of osmolytes. Can use phosphatidylcholine (PC), phosphatidylethanolamine (PE) and phosphatidylglycerol (PG) as substrates, both in presence or in absence of PIP2. Its main substrate is phosphatidylcholine. Stimulates the intrinsic GTPase activity of GPA1 upon binding. Mediates the abscisic acid effects on stomata through interaction with GPA1 and the production of phosphatidic acid that bind to ABI1. Involved in seed aging and deterioration. Involved in microtubule stabilization and salt tolerance. Involved in abscisic acid-induced stomatal closure. This chain is Phospholipase D alpha 1, found in Arabidopsis thaliana (Mouse-ear cress).